The primary structure comprises 369 residues: Septin-5 (369 aa).

Thr13 carries the phosphothreonine modification. The region spanning 41–314 is the Septin-type G domain; sequence KGFDFTLMVA…ENYRAHCIQQ (274 aa). A G1 motif region spans residues 51–58; sequence GESGLGKS. GTP contacts are provided by residues 51–58, Thr85, and Gly111; that span reads GESGLGKS. The G3 motif stretch occupies residues 108–111; sequence DTPG. The residue at position 168 (Arg168) is an Omega-N-methylarginine. Residues 189 to 192 form a G4 motif region; sequence AKAD. 190–198 contributes to the GTP binding site; that stretch reads KADCLVPSE. Ser225 is subject to Phosphoserine. Gly248 and Arg263 together coordinate GTP. Residue Ser327 is modified to Phosphoserine. At Thr336 the chain carries Phosphothreonine. Positions 338–369 form a coiled coil; the sequence is DAETEKLIRMKDEELRRMQEMLQRMKQQMQDQ.

The protein belongs to the TRAFAC class TrmE-Era-EngA-EngB-Septin-like GTPase superfamily. Septin GTPase family. In terms of assembly, septins polymerize into heterooligomeric protein complexes that form filaments, and can associate with cellular membranes, actin filaments and microtubules. GTPase activity is required for filament formation. Interacts with SEPTIN2 and SEPTIN5. In platelets, associated with a complex containing STX4. Interacts with PRKN; this interaction leads to SEPTIN5 ubiquitination and degradation. Interacts with DYRK1A. Interacts with STX1A; in the cerebellar cortex. In terms of processing, phosphorylated by DYRK1A. In platelets, phosphorylated in response to thrombin, phorbol-12-myristate-13-acetate and collagen. In terms of tissue distribution, expressed at high levels in the CNS, as well as in heart and platelets (at protein level).

Its subcellular location is the cytoplasm. It is found in the cytoskeleton. Functionally, filament-forming cytoskeletal GTPase. May play a role in cytokinesis (Potential). May play a role in platelet secretion. The sequence is that of Septin-5 from Homo sapiens (Human).